A 662-amino-acid polypeptide reads, in one-letter code: Transforming growth factor beta activator LRRC32 (662 aa).

An N-terminal signal peptide occupies residues 1-17 (MRPQILLLLALLTLGLA). Residues 18 to 625 (AQRQDKVPCK…EDCEKGGLKN (608 aa)) are Extracellular-facing. The LRRNT domain occupies 21-48 (QDKVPCKMVDKKVSCQGLGLLQVPSVLP). LRR repeat units follow at residues 50–73 (DTET…GFYT), 74–95 (ALRH…AFQA), 98–119 (HLEH…SAGG), 125–145 (RVTS…ERLL), 150–171 (SLHT…TFRD), 174–195 (VLEQ…AFEG), 198–219 (RLTH…SLQQ), 220–240 (LRVL…SQPQ), 244–265 (QLTW…AALP), and 266–286 (RLIY…PPQD). An N-linked (GlcNAc...) asparagine glycan is attached at Asn-203. N-linked (GlcNAc...) asparagine glycans are attached at residues Asn-271 and Asn-308. 10 LRR repeats span residues 316-339 (QLLN…EHLT), 340-361 (SLCF…RSGS), 364-385 (CLML…ARAL), 387-408 (SLRT…TFAN), 411-432 (SLQR…DEPG), 444-465 (SLHS…AFLH), 467-488 (PLTE…ALGG), 492-513 (SLEV…LPCF), 515-536 (CLKR…TQAV), and 537-558 (SLEV…AMGG). N-linked (GlcNAc...) asparagine glycosylation occurs at Asn-345. N-linked (GlcNAc...) asparagine glycosylation is present at Asn-545. Positions 571–620 (NPLSCCGNGWLAAQLHQGRVDVDATQDLICRFSSQEEVSLSHVRPEDCEK) constitute an LRRCT domain. A helical transmembrane segment spans residues 626–646 (INLIIILTFILVSAILLTTLA). Residues 647-662 (TCCCVRRQKFNQQYKA) lie on the Cytoplasmic side of the membrane.

The protein belongs to the LRRC32/LRRC33 family. As to quaternary structure, interacts with TGFB1; associates via disulfide bonds with the Latency-associated peptide chain (LAP) regulatory chain of TGFB1, leading to regulate activation of TGF-beta-1. Interacts with TGFB2. Interacts with TGFB3; associates via disulfide bonds with the Latency-associated peptide chain (LAP) regulatory chain of TGFB3, leading to regulate activation of TGF-beta-3. Interacts with LAPTM4B; decreases TGFB1 production in regulatory T-cells.

Its subcellular location is the cell membrane. The protein localises to the cell surface. In terms of biological role, key regulator of transforming growth factor beta (TGFB1, TGFB2 and TGFB3) that controls TGF-beta activation by maintaining it in a latent state during storage in extracellular space. Associates specifically via disulfide bonds with the Latency-associated peptide (LAP), which is the regulatory chain of TGF-beta, and regulates integrin-dependent activation of TGF-beta. Able to outcompete LTBP1 for binding to LAP regulatory chain of TGF-beta. Controls activation of TGF-beta-1 (TGFB1) on the surface of activated regulatory T-cells (Tregs). Required for epithelial fusion during palate development by regulating activation of TGF-beta-3 (TGFB3). The polypeptide is Transforming growth factor beta activator LRRC32 (Pongo abelii (Sumatran orangutan)).